A 142-amino-acid chain; its full sequence is MRIINADGLILGRLASRVAKMLLEGEEVVIVNAEKAVITGNREVIFSKYKQRTGLRTLTNPRRGPFYPKRSDEIVRRTIRGMLPWKTDRGRKAFRRLKVYVGIPKEFQDKQLETIVEAHVSRLSRPKYVTVGEVAKFLGGKF.

Belongs to the universal ribosomal protein uL13 family. As to quaternary structure, part of the 50S ribosomal subunit.

Its function is as follows. This protein is one of the early assembly proteins of the 50S ribosomal subunit, although it is not seen to bind rRNA by itself. It is important during the early stages of 50S assembly. The polypeptide is Large ribosomal subunit protein uL13 (Pyrococcus horikoshii (strain ATCC 700860 / DSM 12428 / JCM 9974 / NBRC 100139 / OT-3)).